The following is a 403-amino-acid chain: Phosphoglycerate kinase (403 aa).

Residues 21 to 23 (DFN), Arg-36, 59 to 62 (HLGR), Arg-119, and Arg-154 contribute to the substrate site. ATP contacts are provided by residues Lys-207, Gly-299, Glu-330, and 357 to 360 (GGDA).

It belongs to the phosphoglycerate kinase family. Monomer.

The protein localises to the cytoplasm. The enzyme catalyses (2R)-3-phosphoglycerate + ATP = (2R)-3-phospho-glyceroyl phosphate + ADP. It functions in the pathway carbohydrate degradation; glycolysis; pyruvate from D-glyceraldehyde 3-phosphate: step 2/5. This chain is Phosphoglycerate kinase, found in Chlamydia trachomatis serovar A (strain ATCC VR-571B / DSM 19440 / HAR-13).